The following is a 265-amino-acid chain: uncharacterized protein (265 aa).

2 disordered regions span residues 21-53 (TLTH…LGPH) and 78-133 (HAPS…SSVS). A compositionally biased stretch (acidic residues) spans 90–101 (DDDDDDEDDDDS). Residues 114-123 (SSSSSSSPRV) show a composition bias toward low complexity. 137 to 144 (AILHQGKS) serves as a coordination point for ATP.

This is an uncharacterized protein from Saccharomyces cerevisiae (strain ATCC 204508 / S288c) (Baker's yeast).